The following is a 549-amino-acid chain: MVQSELQLQPRAGRRADASNWGDFGSDKGGLGNTDIPPITPNSQRPPKLSNLTYDSPPDYLRTVSCPETCRVLFDYQPEAPDELALQKGDLVKVLRKTTEDKGWWEGECQGRRGVFPDNFVIPPPPIRKLIPRKIISRESAPIKETKKLMPKSSLPTVKKLAAAASAPGRAKTLSTPSGDSQKRPSRNSGFNGSCLNGGPRQPGRKGSRTQASQQHSASSQEDEQKSPGKGPSRSKTPTPEKTRLPDKVLAPETIPAPDKVSIPKDPVPKKAPDSDKIPATEDTTLDKAGTPESTLSGNKPAKDEALDLKMALHEDTAPALVKILTPEHMIFKKEPSRDNDQCQHLPQGGSTQRPESPAPSNNIQVPGEYSPPPDSSERSCCRVRQVNGSFPAQSKAEDVSAMEEANFLEEPLAKDERTLNKALPKKLPSERAGPQKQVLPQESAPTPQVPHTIQQMPVPEEAPTLHPLTPLTSPKSKNDRMDVLESLKEEVGLLRSRLELLELKLEQKMGDVWEELKTETLLSPEVQMMQRNRKSFKHAETQTETQTE.

The segment at 1–56 (MVQSELQLQPRAGRRADASNWGDFGSDKGGLGNTDIPPITPNSQRPPKLSNLTYDS) is disordered. Positions 41–54 (PNSQRPPKLSNLTY) are enriched in polar residues. Residues 65-126 (SCPETCRVLF…PDNFVIPPPP (62 aa)) enclose the SH3 domain. 2 disordered regions span residues 142–303 (PIKE…KPAK) and 332–479 (FKKE…KSKN). A compositionally biased stretch (low complexity) spans 211–220 (QASQQHSASS). Composition is skewed to basic and acidic residues over residues 267–280 (PVPKKAPDSDKIPA) and 332–342 (FKKEPSRDNDQ). Composition is skewed to polar residues over residues 343–365 (CQHLPQGGSTQRPESPAPSNNIQ) and 439–456 (VLPQESAPTPQVPHTIQQ). Positions 482 to 510 (MDVLESLKEEVGLLRSRLELLELKLEQKM) form a coiled coil. The segment at 528–549 (QMMQRNRKSFKHAETQTETQTE) is disordered.

This chain is SH3 domain-containing protein 21 (Sh3d21), found in Mus musculus (Mouse).